The sequence spans 175 residues: Diacylglycerol kinase (175 aa).

Helical transmembrane passes span 55–75 (VAPNLLVSFRYAWAGVSYAFA) and 96–116 (LLHLEAIAVAVLALTSCLVMI). E118 functions as the Proton acceptor in the catalytic mechanism. Residue E125 participates in a divalent metal cation binding. The helical transmembrane segment at 151–171 (VLLAAIAAVIVGGCLLLPPLL) threads the bilayer.

Belongs to the bacterial diacylglycerol kinase family. Mg(2+) serves as cofactor.

The protein localises to the cell membrane. It catalyses the reaction a 1,2-diacyl-sn-glycerol + ATP = a 1,2-diacyl-sn-glycero-3-phosphate + ADP + H(+). Its function is as follows. Catalyzes the ATP-dependent phosphorylation of sn-l,2-diacylglycerol (DAG) to phosphatidic acid. The sequence is that of Diacylglycerol kinase (dgkA) from Synechocystis sp. (strain ATCC 27184 / PCC 6803 / Kazusa).